A 479-amino-acid polypeptide reads, in one-letter code: Proline--tRNA ligase (479 aa).

The protein belongs to the class-II aminoacyl-tRNA synthetase family. ProS type 3 subfamily. As to quaternary structure, homodimer.

The protein localises to the cytoplasm. The catalysed reaction is tRNA(Pro) + L-proline + ATP = L-prolyl-tRNA(Pro) + AMP + diphosphate. Functionally, catalyzes the attachment of proline to tRNA(Pro) in a two-step reaction: proline is first activated by ATP to form Pro-AMP and then transferred to the acceptor end of tRNA(Pro). This Mesomycoplasma hyopneumoniae (strain J / ATCC 25934 / NCTC 10110) (Mycoplasma hyopneumoniae) protein is Proline--tRNA ligase.